The following is a 287-amino-acid chain: Ret finger protein-like 4A-like protein 1 (287 aa).

An RING-type; degenerate zinc finger spans residues 11-53 (CPVCLKDLEEAVQLKCGYACCLQCLNSLQKEPDGEGLLCRFCS). The B30.2/SPRY domain occupies 78–276 (EPKLKSVLTM…LSICSVINPS (199 aa)).

The polypeptide is Ret finger protein-like 4A-like protein 1 (RFPL4AL1) (Homo sapiens (Human)).